A 315-amino-acid polypeptide reads, in one-letter code: Ribosomal RNA small subunit methyltransferase H (315 aa).

S-adenosyl-L-methionine contacts are provided by residues 35 to 37 (GGH), D55, F79, D101, and Q108.

It belongs to the methyltransferase superfamily. RsmH family.

The protein resides in the cytoplasm. The enzyme catalyses cytidine(1402) in 16S rRNA + S-adenosyl-L-methionine = N(4)-methylcytidine(1402) in 16S rRNA + S-adenosyl-L-homocysteine + H(+). Its function is as follows. Specifically methylates the N4 position of cytidine in position 1402 (C1402) of 16S rRNA. In Sodalis glossinidius (strain morsitans), this protein is Ribosomal RNA small subunit methyltransferase H.